The chain runs to 272 residues: Endoplasmic reticulum resident protein 27 (272 aa).

The signal sequence occupies residues 1-25 (MEAMPSRCLFLLFLSTCKLSPEVVA). The 114-residue stretch at 38–151 (EPMRLTDVQA…LVTEYNAITA (114 aa)) folds into the Thioredoxin domain. A glycan (N-linked (GlcNAc...) asparagine) is linked at asparagine 99. A PDIA3-binding site region spans residues 229-232 (DKWD). The Prevents secretion from ER motif lies at 269-272 (KVEL).

This sequence belongs to the protein disulfide isomerase family. In terms of assembly, interacts with PDIA3.

It is found in the endoplasmic reticulum lumen. Functionally, specifically binds unfolded proteins and may recruit protein disulfide isomerase PDIA3 to unfolded substrates. Binds protein substrates via a hydrophobic pocket in the C-terminal domain. May play a role in the unfolded stress response. This chain is Endoplasmic reticulum resident protein 27 (ERP27), found in Bos taurus (Bovine).